The sequence spans 459 residues: Putrescine aminotransferase (459 aa).

Residues 150–151 (GT) and glutamine 274 contribute to the pyridoxal 5'-phosphate site. Residue lysine 300 is modified to N6-(pyridoxal phosphate)lysine. Residue threonine 332 participates in pyridoxal 5'-phosphate binding.

This sequence belongs to the class-III pyridoxal-phosphate-dependent aminotransferase family. Putrescine aminotransferase subfamily. Requires pyridoxal 5'-phosphate as cofactor.

The catalysed reaction is an alkane-alpha,omega-diamine + 2-oxoglutarate = an omega-aminoaldehyde + L-glutamate. The enzyme catalyses putrescine + 2-oxoglutarate = 1-pyrroline + L-glutamate + H2O. It carries out the reaction cadaverine + 2-oxoglutarate = 5-aminopentanal + L-glutamate. It functions in the pathway amine and polyamine degradation; putrescine degradation; 4-aminobutanal from putrescine (transaminase route): step 1/1. Catalyzes the aminotransferase reaction from putrescine to 2-oxoglutarate, leading to glutamate and 4-aminobutanal, which spontaneously cyclizes to form 1-pyrroline. This is the first step in one of two pathways for putrescine degradation, where putrescine is converted into 4-aminobutanoate (gamma-aminobutyrate or GABA) via 4-aminobutanal. Also functions as a cadaverine transaminase in a a L-lysine degradation pathway to succinate that proceeds via cadaverine, glutarate and L-2-hydroxyglutarate. The protein is Putrescine aminotransferase of Escherichia coli O8 (strain IAI1).